A 572-amino-acid polypeptide reads, in one-letter code: Fusion glycoprotein F0 (572 aa).

A signal peptide spans methionine 1–cysteine 25. Over glutamine 26–asparagine 522 the chain is Extracellular. N-linked (GlcNAc...) asparagine; by host glycans are attached at residues asparagine 27 and asparagine 70. Disulfide bonds link cysteine 37–cysteine 437, cysteine 69–cysteine 212, cysteine 311–cysteine 341, cysteine 320–cysteine 331, cysteine 356–cysteine 365, cysteine 380–cysteine 391, and cysteine 414–cysteine 420. The stretch at valine 76–leucine 96 forms a coiled coil. N-linked (GlcNAc...) asparagine; by host glycosylation occurs at asparagine 120. The interval phenylalanine 137–valine 157 is fusion peptide. Positions lysine 156–valine 207 form a coiled coil. Positions leucine 479–valine 514 form a coiled coil. A glycan (N-linked (GlcNAc...) asparagine; by host) is linked at asparagine 498. Residues valine 523–cysteine 548 traverse the membrane as a helical segment. Cysteine 548 carries S-palmitoyl cysteine; by host lipidation. Topologically, residues lysine 549–lysine 572 are cytoplasmic.

Belongs to the paramyxoviruses fusion glycoprotein family. Homotrimer. Heterodimer with fusion protein F2; disulfide-linked. Part of a complex composed of F1, F2 and G glycoproteins. As a heterodimer with F2, interacts with host RHOA; this interaction facilitates virus-induced syncytium formation. In terms of assembly, homotrimer. Heterodimer with fusion protein F1; disulfide-linked. Part of a complex composed of F1, F2 and G glycoproteins. As a heterodimer with F1, interacts with host RHOA; this interaction facilitates virus-induced syncytium formation. In terms of processing, the F glycoprotein is synthesized as a F0 inactive precursor that is heavily N-glycosylated and processed at two sites by a host furin-like protease probably in the Golgi. The cleavage site between p27 and F1 may occur after endocytosis to yield the mature F1 and F2 proteins. Both cleavages are required for membrane fusion and p27 is released from the processed protein.

The protein resides in the host Golgi apparatus membrane. It localises to the virion membrane. The protein localises to the host cell membrane. Its function is as follows. Inactive precursor that is cleaved at two sites by a furin-like protease to give rise to the mature F1 and F2 fusion glycoproteins. Functionally, class I viral fusion protein. Under the current model, the protein has at least 3 conformational states: pre-fusion native state, pre-hairpin intermediate state, and post-fusion hairpin state. During viral and plasma cell membrane fusion, the coiled coil regions assume a trimer-of-hairpins structure, positioning the fusion peptide in close proximity to the C-terminal region of the ectodomain. The formation of this structure appears to drive apposition and subsequent fusion of viral and cellular membranes leading to delivery of the nucleocapsid into the cytoplasm. This fusion is pH independent and occurs at the plasma or endosomal membrane. The trimer of F1-F2 (F protein) also facilitates the attachment and entry into the host cell. Later in infection, F protein expressed at the plasma membrane of infected cells can mediate fusion with adjacent cells to form syncytia, a cytopathic effect that could lead to tissue necrosis. In terms of biological role, major determinant of the species specificity of RSV infection. The trimer of F1-F2 (F protein) also facilitates the attachment and entry into the host cell. Later in infection, F protein expressed at the plasma membrane of infected cells can mediate fusion with adjacent cells to form syncytia, a cytopathic effect that could lead to tissue necrosis. The chain is Fusion glycoprotein F0 (F) from Bovine respiratory syncytial virus (strain A51908) (BRS).